Consider the following 340-residue polypeptide: MRSFRAVRNFSTTAKRLSQAPKASTPNASSGNGFVLAFVAAAAGAGAYYYYANSPAAKVETFNATKADYQKVYDAIADKLIEDDDYDDGSYGPVLLRLAWHSSGTYNKSDNKFGSSGGTMRFKPEASHAANNGLVNARNFLKPIHEKFPWISTGDLYTLGGVTAVQELGGPIIPWKRGRVDEPESASPPDGSLPDASQGATHVRNVFNRQGFNDQEMVALIGAHALGRCHKQNSGFEGPWTFSPTMFTNDFYKLLLDDKWQWKKWDGNPQYEDVKTKSLMMLPTDMALATDKNFKKWATAYAKDQDLFFKDFSAAFSKMLNNGVDFPQGTEIWEFKPKNA.

A mitochondrion-targeting transit peptide spans methionine 1 to leucine 17. The Proton acceptor role is filled by histidine 101. The tract at residues tryptophan 175 to glutamine 198 is disordered. Histidine 224 lines the heme b pocket. Tryptophan 240 (tryptophan radical intermediate) is an active-site residue.

Belongs to the peroxidase family. Cytochrome c peroxidase subfamily. In terms of assembly, forms a one-to-one complex with cytochrome c. It depends on heme b as a cofactor.

The protein resides in the mitochondrion matrix. It is found in the mitochondrion intermembrane space. It catalyses the reaction 2 Fe(II)-[cytochrome c] + H2O2 + 2 H(+) = 2 Fe(III)-[cytochrome c] + 2 H2O. In terms of biological role, destroys radicals which are normally produced within the cells and which are toxic to biological systems. The polypeptide is Cytochrome c peroxidase, mitochondrial (CCP1) (Yarrowia lipolytica (strain CLIB 122 / E 150) (Yeast)).